The primary structure comprises 304 residues: E3 ubiquitin-protein ligase RNF115 (304 aa).

Ala2 is modified (N-acetylalanine). Positions 95-138 are disordered; sequence PLDQDNRANERGHQTHTDFWGARPPRLPLGRRYRSRGSSRPDRS. The span at 98–110 shows a compositional bias: basic and acidic residues; it reads QDNRANERGHQTH. Phosphoserine; by PKB/AKT1 is present on residues Ser132 and Ser133. An RING-type zinc finger spans residues 228–269; that stretch reads CPVCKEDYTVEEEVRQLPCNHFFHSSCIVPWLELHDTCPVCR. Positions 272-304 are disordered; that stretch reads LNGEDSTRQSQSTEASASNRFSNDSQLHDRWTF. Residues 279-296 show a composition bias toward polar residues; the sequence is RQSQSTEASASNRFSNDS.

In terms of assembly, interacts with RAB7A. Interacts with EGFR and FLT3. Interacts with BST2. Interacts with STX17. Interacts with YWHAE. Post-translationally, phosphorylated by AKT1, allowing association with the 14-3-3 chaperones that facilitates associating with TLRs. RING-type zinc finger-dependent and E2-dependent autoubiquitination. In terms of processing, deubiquitinated by USP9X; antogonizing its autoubiquitination and subsequent proteasomal degradation. As to expression, expressed at extremely low levels in normal breast, prostate, lung, colon. Higher levels of expression are detected in heart, skeletal muscle, testis as well as in breast and prostate cancer cells.

It localises to the cytoplasm. The protein resides in the nucleus. Its subcellular location is the endoplasmic reticulum. The protein localises to the golgi apparatus. It catalyses the reaction S-ubiquitinyl-[E2 ubiquitin-conjugating enzyme]-L-cysteine + [acceptor protein]-L-lysine = [E2 ubiquitin-conjugating enzyme]-L-cysteine + N(6)-ubiquitinyl-[acceptor protein]-L-lysine.. It functions in the pathway protein modification; protein ubiquitination. Its function is as follows. E3 ubiquitin-protein ligase that catalyzes the 'Lys-48'- and/or 'Lys-63'-linked polyubiquitination of various substrates and thereby plays a role in a number of signaling pathways including autophagy, innate immunity, cell proliferation and cell death. Plays a role in the endosomal trafficking and degradation of membrane receptors including EGFR, FLT3, MET and CXCR4 through their polyubiquitination. Participates together with BST2 in antiviral immunity by facilitating the internalization of HIV-1 virions into intracellular vesicles leading to their lysosomal degradation. Also possesses an antiviral activity independently of BST2 by promoting retroviral GAG proteins ubiquitination, redistribution to endo-lysosomal compartments and, ultimately, lysosomal degradation. Catalyzes distinct types of ubiquitination on MAVS and STING1 at different phases of viral infection to promote innate antiviral response. Mediates the 'Lys-48'-linked ubiquitination of MAVS leading to its proteasomal degradation and ubiquitinates STING1 via 'Lys-63'-linked polyubiquitination, critical for its oligomerization and the subsequent recruitment of TBK1. Plays a positive role in the autophagosome-lysosome fusion by interacting with STX17 and enhancing its stability without affecting 'Lys-48'- or 'Lys-63'-linked polyubiquitination levels, which in turn promotes autophagosome maturation. Negatively regulates TLR-induced expression of proinflammatory cytokines by catalyzing 'Lys-11'-linked ubiquitination of RAB1A and RAB13 to inhibit post-ER trafficking of TLRs to the Golgi by RAB1A and subsequently from the Golgi apparatus to the cell surface by RAB13. The sequence is that of E3 ubiquitin-protein ligase RNF115 from Homo sapiens (Human).